Here is a 35-residue protein sequence, read N- to C-terminus: Phosphoribulokinase (35 aa).

Belongs to the phosphoribulokinase family.

The protein resides in the plastid. It localises to the chloroplast. It catalyses the reaction D-ribulose 5-phosphate + ATP = D-ribulose 1,5-bisphosphate + ADP + H(+). The protein operates within carbohydrate biosynthesis; Calvin cycle. With respect to regulation, light regulated via thioredoxin by reversible oxidation/reduction of sulfhydryl/disulfide groups. This is Phosphoribulokinase from Pinus pinaster (Maritime pine).